Reading from the N-terminus, the 1253-residue chain is MNYIPTQTFYGRRWRPRPAARPWPLQATPVAPVVPDFQAQQMQQLISAVNALTMRQNAIAPARPPKPKKKKTTKPKPKTQPKKINGKTQQQKKKDKQADKKKKKPGKRERMCMKIENDCIFEVKHEGKVTGYACLVGDKVMKPAHVKGVIDNADLAKLAFKKSSKYDLECAQIPVHMRSDASKYTHEKPEGHYNWHHGAVQYSGGRFTIPTGAGKPGDSGRPIFDNKGRVVAIVLGGANEGSRTALSVVTWNKDMVTRVTPEGSEEWSAPLITAMCVLANATFPCFQPPCVPCCYENNAEATLRMLEDNVDRPGYYDLLQAALTCRNGTRHRRSVSQHFNVYKATRPYIAYCADCGAGHSCHSPVAIEAVRSEATDGMLKIQFSAQIGIDKSDNHDYTKIRYADGHAIENAVRSSLKVATSGDCFVHGTMGHFILAKCPPGEFLQVSIQDTRNAVRACRIQYHHDPQPVGREKFTIRPHYGKEIPCTTYQQTTAETVEEIDMHMPPDTPDRTLLSQQSGNVKITVGGKKVKYNCTCGTGNVGTTNSDMTINTCLIEQCHVSVTDHKKWQFNSPFVPRADEPARKGKVHIPFPLDNITCRVPMAREPTVIHGKREVTLHLHPDHPTLFSYRTLGEDPQYHEEWVTAAVERTIPVPVDGMEYHWGNNDPVRLWSQLTTEGKPHGWPHQIVQYYYGLYPAATVSAVVGMSLLALISIFASCYMLVAARSKCLTPYALTPGAAVPWTLGILCCAPRAHAASVAETMAYLWDQNQALFWLEFAAPVACILIITYCLRNVLCCCKSLSFLVLLSLGATARAYEHSTVMPNVVGFPYKAHIERPGYSPLTLQMQVVETSLEPTLNLEYITCEYKTVVPSPYVKCCGASECSTKEKPDYQCKVYTGVYPFMWGGAYCFCDSENTQLSEAYVDRSDVCRHDHASAYKAHTASLKAKVRVMYGNVNQTVDVYVNGDHAVTIGGTQFIFGPLSSAWTPFDNKIVVYKDEVFNQDFPPYGSGQPGRFGDIQSRTVESNDLYANTALKLARPSPGMVHVPYTQTPSGFKYWLKEKGTALNTKAPFGCQIKTNPVRAMNCAVGNIPVSMNLPDSAFTRIVEAPTIIDLTCTVATCTHSSDFGGVLTLTYKTNKNGDCSVHSHSNVATLQEATAKVKTAGKVTLHFSTASASPSFVVSLCSARATCSASCEPPKDHIVPYAASHSNVVFPDMSGTALSWVQKISGGLGAFAIGAILVLVVVTCIGLRR.

The interval 37–71 (FQAQQMQQLISAVNALTMRQNAIAPARPPKPKKKK) is host transcription inhibition. Positions 58–109 (AIAPARPPKPKKKKTTKPKPKTQPKKINGKTQQQKKKDKQADKKKKKPGKRE) are disordered. The short motif at 64-105 (PPKPKKKKTTKPKPKTQPKKINGKTQQQKKKDKQADKKKKKP) is the Nuclear localization signal element. Basic residues predominate over residues 65 to 107 (PKPKKKKTTKPKPKTQPKKINGKTQQQKKKDKQADKKKKKPGK). The interval 87 to 120 (KTQQQKKKDKQADKKKKKPGKRERMCMKIENDCI) is binding to the viral RNA. The segment at 105-119 (PGKRERMCMKIENDC) is ribosome-binding. Cysteine 119 and cysteine 134 form a disulfide bridge. The region spanning 119–267 (CIFEVKHEGK…RVTPEGSEEW (149 aa)) is the Peptidase S3 domain. The active-site Charge relay system is the histidine 145. The short motif at 150-160 (IDNADLAKLAF) is the Nuclear export signal element. An interaction with spike glycoprotein E2 region spans residues 161–166 (KKSSKY). Aspartate 167 acts as the Charge relay system in catalysis. The tract at residues 189 to 199 (PEGHYNWHHGA) is dimerization of the capsid protein. Serine 219 (charge relay system) is an active-site residue. Residues 225–229 (DNKGR) form a dimerization of the capsid protein region. Topologically, residues 268 to 701 (SAPLITAMCV…YGLYPAATVS (434 aa)) are extracellular. Cystine bridges form between cysteine 276–cysteine 285, cysteine 290–cysteine 294, and cysteine 293–cysteine 325. Asparagine 280 is a glycosylation site (N-linked (GlcNAc...) asparagine; by host). A glycan (N-linked (GlcNAc...) asparagine; by host) is linked at asparagine 327. Disulfide bonds link cysteine 352–cysteine 458, cysteine 355–cysteine 361, cysteine 424–cysteine 438, cysteine 486–cysteine 598, cysteine 534–cysteine 558, and cysteine 536–cysteine 553. The N-linked (GlcNAc...) asparagine; by host glycan is linked to asparagine 533. Asparagine 595 carries N-linked (GlcNAc...) asparagine; by host glycosylation. The helical transmembrane segment at 702 to 722 (AVVGMSLLALISIFASCYMLV) threads the bilayer. Residue cysteine 718 is the site of S-stearoyl cysteine; by host attachment. The segment at 723–727 (AARSK) is interaction with the capsid protein. Residues 723–755 (AARSKCLTPYALTPGAAVPWTLGILCCAPRAHA) lie on the Cytoplasmic side of the membrane. Cysteine 728 carries the S-stearoyl cysteine; by host lipid modification. The segment at 728–748 (CLTPYALTPGAAVPWTLGILC) is transient transmembrane before p62-6K protein processing. A disulfide bond links cysteine 728 and cysteine 749. Residues cysteine 748 and cysteine 749 are each lipidated (S-palmitoyl cysteine; by host). At 756–770 (ASVAETMAYLWDQNQ) the chain is on the extracellular side. A helical transmembrane segment spans residues 771 to 791 (ALFWLEFAAPVACILIITYCL). Residue arginine 792 is a topological domain, cytoplasmic. A helical transmembrane segment spans residues 793 to 813 (NVLCCCKSLSFLVLLSLGATA). Over 814–1230 (RAYEHSTVMP…ALSWVQKISG (417 aa)) the chain is Extracellular. 4 disulfides stabilise this stretch: cysteine 864–cysteine 929, cysteine 877–cysteine 909, cysteine 878–cysteine 911, and cysteine 883–cysteine 893. The interval 899-916 (VYPFMWGGAYCFCDSENT) is E1 fusion peptide loop. 2 N-linked (GlcNAc...) asparagine; by host glycosylation sites follow: asparagine 956 and asparagine 1085. Disulfide bonds link cysteine 1074-cysteine 1086, cysteine 1116-cysteine 1191, cysteine 1121-cysteine 1195, and cysteine 1143-cysteine 1185. Positions 1112–1192 (IDLTCTVATC…SLCSARATCS (81 aa)) are E1-DIII; interaction with host receptor VLDLR. The helical transmembrane segment at 1231–1251 (GLGAFAIGAILVLVVVTCIGL) threads the bilayer. Cysteine 1248 carries S-stearoyl cysteine; by host lipidation. The Cytoplasmic portion of the chain corresponds to 1252-1253 (RR).

In terms of assembly, homodimer. Homomultimer. Interacts with host karyopherin KPNA4; this interaction allows the nuclear import of the viral capsid protein. Interacts with spike glycoprotein E2. Interacts with host IRAK1; the interaction leads to inhibition of IRAK1-dependent signaling. As to quaternary structure, the precursor of protein E3/E2 and E1 form a heterodimer shortly after synthesis. The precursor of protein E3/E2 and E1 form a heterodimer shortly after synthesis. Processing of the precursor of protein E3/E2 into E2 and E3 results in a heterodimer of the spike glycoproteins E2 and E1. Spike at virion surface are constituted of a trimer of E2-E1 heterodimers. E2-E1 heterodimers interact with host VLDLR or LRP8/APOER2 to mediate viral entry. After target cell attachment and endocytosis, E1 change conformation to form homotrimers. Interacts with 6K protein. Interacts (via E1-DIII) with host VLDLR (via class A repeats); this interaction mediates viral entry into host cell. In terms of assembly, interacts with spike glycoprotein E1. Processing of the precursor of protein E3/E2 into E2 and E3 results in a heterodimer of the spike glycoproteins E2 and E1. Spike at virion surface are constituted of a trimer of E2-E1 heterodimers. E2-E1 heterodimers interact with host VLDLR or LRP8/APOER2 to mediate viral entry. Interacts with 6K protein. As to quaternary structure, oligomer. Interacts with spike glycoprotein E1. Interacts with spike glycoprotein E2. In terms of processing, specific enzymatic cleavages in vivo yield mature proteins. Capsid protein is auto-cleaved during polyprotein translation, unmasking a signal peptide at the N-terminus of the precursor of E3/E2. The remaining polyprotein is then targeted to the host endoplasmic reticulum, where host signal peptidase cleaves it into pE2, 6K and E1 proteins. pE2 is further processed to mature E3 and E2 by host furin in trans-Golgi vesicle. Protein processing process takes about 30 minutes at physiologic temperatures. The folding of the p62/6K/E1 precursor requires the formation of intrachain disulfide bonds and has been shown to involve a transient covalent interaction between the nascent and newly synthesized heterodimer and the host-cell chaperones, P4HB/PDI and PDIA3/ERp57. The folding pathway also includes non covalent interaction with human CANX/calnexin and CALR/calreticulin. Post-translationally, palmitoylated via thioester bonds. These palmitoylations may induce disruption of the C-terminus transmembrane. This would result in the reorientation of E2 C-terminus from lumenal to cytoplasmic side. Envelope E1, E2 and E3 proteins are N-glycosylated. In terms of processing, stearoylated. Post-translationally, palmitoylated via thioester bonds with about four covalently bound fatty acids per molecule.

The protein resides in the virion. It is found in the host cytoplasm. It localises to the host cell membrane. The protein localises to the host nucleus. Its subcellular location is the virion membrane. The protein resides in the host Golgi apparatus. It is found in the host trans-Golgi network. It localises to the host endoplasmic reticulum. The enzyme catalyses Autocatalytic release of the core protein from the N-terminus of the togavirus structural polyprotein by hydrolysis of a -Trp-|-Ser- bond.. Its function is as follows. Forms an icosahedral capsid with a T=4 symmetry composed of 240 copies of the capsid protein surrounded by a lipid membrane through which penetrate 80 spikes composed of trimers of E1-E2 heterodimers. The capsid protein binds to the viral RNA genome at a site adjacent to a ribosome binding site for viral genome translation following genome release. Possesses a protease activity that results in its autocatalytic cleavage from the nascent structural protein. Following its self-cleavage, the capsid protein transiently associates with ribosomes, and within several minutes the protein binds to viral RNA and rapidly assembles into icosahedric core particles. The resulting nucleocapsid eventually associates with the cytoplasmic domain of the spike glycoprotein E2 at the cell membrane, leading to budding and formation of mature virions. In case of infection, new virions attach to target cells and after clathrin-mediated endocytosis their membrane fuses with the host endosomal membrane. This leads to the release of the nucleocapsid into the cytoplasm, followed by an uncoating event necessary for the genomic RNA to become accessible. The uncoating might be triggered by the interaction of capsid proteins with ribosomes. Binding of ribosomes would release the genomic RNA since the same region is genomic RNA-binding and ribosome-binding. Specifically inhibits interleukin-1 receptor-associated kinase 1/IRAK1-dependent signaling during viral entry, representing a means by which the alphaviruses may evade innate immune detection and activation prior to viral gene expression. Functionally, provides the signal sequence for the translocation of the precursor of protein E3/E2 to the host endoplasmic reticulum. Furin-cleaved E3 remains associated with spike glycoprotein E1 and mediates pH protection of the latter during the transport via the secretory pathway. After virion release from the host cell, the assembly protein E3 is gradually released in the extracellular space. Plays a role in viral attachment to target host cell, by binding to the cell receptors VLDLR or LRP8/APOER2. The host LDLR can act as a cell receptor for viral entry. Synthesized as a p62 precursor which is processed by furin at the cell membrane just before virion budding, giving rise to E2-E1 heterodimer. The p62-E1 heterodimer is stable, whereas E2-E1 is unstable and dissociate at low pH. p62 is processed at the last step, presumably to avoid E1 fusion activation before its final export to cell surface. E2 C-terminus contains a transitory transmembrane that would be disrupted by palmitoylation, resulting in reorientation of the C-terminal tail from lumenal to cytoplasmic side. This step is critical since E2 C-terminus is involved in budding by interacting with capsid proteins. This release of E2 C-terminus in cytoplasm occurs lately in protein export, and precludes premature assembly of particles at the endoplasmic reticulum membrane. In terms of biological role, acts as a viroporin that participates in virus glycoprotein processing and transport to the plasma membrane, cell permeabilization and budding of viral particles. Disrupts the calcium homeostasis of the cell, probably at the endoplasmic reticulum level. This leads to cytoplasmic calcium elevation. Because of its lipophilic properties, the 6K protein is postulated to influence the selection of lipids that interact with the transmembrane domains of the glycoproteins, which, in turn, affects the deformability of the bilayer required for the extreme curvature that occurs as budding proceeds. Present in low amount in virions, about 3% compared to viral glycoproteins. Its function is as follows. Class II viral fusion protein. Fusion activity is inactive as long as E1 is bound to E2 in mature virion. After virus attachment to target cell via host VLDLR or LRP8/APOER2 and endocytosis, acidification of the endosome induces dissociation of E1/E2 heterodimer and concomitant trimerization of the E1 subunits. This E1 trimer is fusion active, and promotes release of viral nucleocapsid in cytoplasm after endosome and viral membrane fusion. Efficient fusion requires the presence of cholesterol and sphingolipid in the target membrane. Fusion is optimal at levels of about 1 molecule of cholesterol per 2 molecules of phospholipids, and is specific for sterols containing a 3-beta-hydroxyl group. The protein is Structural polyprotein of Aedes (Middle-African hedgehog).